A 255-amino-acid polypeptide reads, in one-letter code: MSTLFIGDIHLSVEYPEITKNFFRFLQTEATQAESLYILGDLFDKWIGDDDPHPFYREVAAELFALKKKGIPCYFIHGNRDFLIGQAFADESGMILLPECKVIQLYDYNICILHGDTLCTKDTEYQIFRKIAHHRFIQRLFLCLPLSFRFYIAKKLRLQSGEQNKKKGEEIMDVDPQSVLDLMACHDVDWIIHGHTHRPAIHNIEMIVTPLLSSKKIARRAVLSAWHNEGSMIKVTFDAIELIFFPFRVSDFEKI.

Residues D8, H10, D41, N79, and H114 each coordinate Mn(2+). 79–80 (NR) contributes to the substrate binding site. Substrate contacts are provided by D122, S160, N164, K167, and H195. Positions 195 and 197 each coordinate Mn(2+).

This sequence belongs to the LpxH family. Mn(2+) serves as cofactor.

The protein localises to the cell inner membrane. It carries out the reaction UDP-2-N,3-O-bis[(3R)-3-hydroxytetradecanoyl]-alpha-D-glucosamine + H2O = 2-N,3-O-bis[(3R)-3-hydroxytetradecanoyl]-alpha-D-glucosaminyl 1-phosphate + UMP + 2 H(+). The protein operates within glycolipid biosynthesis; lipid IV(A) biosynthesis; lipid IV(A) from (3R)-3-hydroxytetradecanoyl-[acyl-carrier-protein] and UDP-N-acetyl-alpha-D-glucosamine: step 4/6. Hydrolyzes the pyrophosphate bond of UDP-2,3-diacylglucosamine to yield 2,3-diacylglucosamine 1-phosphate (lipid X) and UMP by catalyzing the attack of water at the alpha-P atom. Involved in the biosynthesis of lipid A, a phosphorylated glycolipid that anchors the lipopolysaccharide to the outer membrane of the cell. The polypeptide is UDP-2,3-diacylglucosamine hydrolase (Hamiltonella defensa subsp. Acyrthosiphon pisum (strain 5AT)).